The primary structure comprises 230 residues: Voltage-gated hydrogen channel 1 (230 aa).

Over 1–58 (MAGCLRHFTSVGDDTKKKAWKEEDVEVAHEEEPKNTPHPFIASYSFRGALKWLFSSHK) the chain is Cytoplasmic. The helical transmembrane segment at 59–79 (FQIVIICLVILDALFVLVEVL) threads the bilayer. At 80–96 (LDLELLAEKVDHIIPEI) the chain is on the extracellular side. A helical transmembrane segment spans residues 97-119 (FHYLSISVLSFFILEIAGKLYAF). Residues 120 to 127 (RLEFFHHK) lie on the Cytoplasmic side of the membrane. Residues 128–148 (FEVFDAAIVVISFIIDIVYIS) traverse the membrane as a helical segment. The Extracellular segment spans residues 149–155 (REDIFNA). The chain crosses the membrane as a helical span at residues 156–176 (VGLLILLRLWRVARIVNGIIV). Positions 177–226 (SVKTQAEDKIHRLKENQESLLEKVAHLEQQCAQQEQEIVRLQTLLQQHNV) form a coiled coil. Topologically, residues 177–230 (SVKTQAEDKIHRLKENQESLLEKVAHLEQQCAQQEQEIVRLQTLLQQHNVFPAS) are cytoplasmic.

This sequence belongs to the hydrogen channel family. Homodimer.

It localises to the membrane. The protein localises to the cell membrane. Mediates the voltage-dependent proton permeability of excitable membranes. Forms a proton-selective channel through which protons may pass in accordance with their electrochemical gradient. The protein is Voltage-gated hydrogen channel 1 (hvcn1) of Xenopus tropicalis (Western clawed frog).